We begin with the raw amino-acid sequence, 117 residues long: Large ribosomal subunit protein bL20 (117 aa).

This sequence belongs to the bacterial ribosomal protein bL20 family.

Binds directly to 23S ribosomal RNA and is necessary for the in vitro assembly process of the 50S ribosomal subunit. It is not involved in the protein synthesizing functions of that subunit. The sequence is that of Large ribosomal subunit protein bL20 from Leptospira biflexa serovar Patoc (strain Patoc 1 / Ames).